Reading from the N-terminus, the 154-residue chain is Lymphocyte antigen 6K (154 aa).

Residues 1–20 (MAFLVALLVVLGLQLVQSNA) form the signal peptide. Residues 21–117 (LTCHVCEAQN…NGEGPPTDQL (97 aa)) form the UPAR/Ly6 domain. A lipid anchor (GPI-anchor amidated glycine) is attached at Gly123. Residues 124 to 154 (KASGRRHRYIELLLTGFMVLTANGLSALCLL) constitute a propeptide, removed in mature form.

As to quaternary structure, interacts with ADAM3 and TEX101. As to expression, strongly expressed in testes and weakly expressed in the epididymis, ovary, and uterus. Expressed in testicular germ cells (TGCs). Expressed in the testicular seminiferous tubules, in spermatocytes, spermatids, and testicular spermatozoa.

It is found in the secreted. The protein localises to the cytoplasm. The protein resides in the cell membrane. Its subcellular location is the cytoplasmic vesicle. It localises to the secretory vesicle. It is found in the acrosome. The protein localises to the membrane raft. Required for sperm migration into the oviduct and male fertility by controlling binding of sperm to zona pellucida. May play a role in cell growth. The chain is Lymphocyte antigen 6K from Mus musculus (Mouse).